The sequence spans 90 residues: Probable acyl carrier protein (90 aa).

One can recognise a Carrier domain in the interval 9-90 (QVTVEELSAL…LVNGALKTGV (82 aa)). Serine 47 carries the post-translational modification O-(pantetheine 4'-phosphoryl)serine.

Post-translationally, 4'-phosphopantetheine is transferred from CoA to a specific serine of the apo-ACP-like protein.

Involved in developmentally regulated synthesis of a compound biosynthetically related to polyketide antibiotics which is essential for spore color in Streptomyces coelicolor. This Streptomyces coelicolor (strain ATCC BAA-471 / A3(2) / M145) protein is Probable acyl carrier protein.